The chain runs to 280 residues: Pantothenate synthetase (280 aa).

Residue 30–37 (MGYLHEGH) participates in ATP binding. H37 acts as the Proton donor in catalysis. Residue Q61 coordinates (R)-pantoate. Q61 contributes to the beta-alanine binding site. 147–150 (GQKD) provides a ligand contact to ATP. (R)-pantoate is bound at residue Q153. Residues V176 and 184–187 (MSSR) each bind ATP.

The protein belongs to the pantothenate synthetase family. In terms of assembly, homodimer.

The protein localises to the cytoplasm. It catalyses the reaction (R)-pantoate + beta-alanine + ATP = (R)-pantothenate + AMP + diphosphate + H(+). It functions in the pathway cofactor biosynthesis; (R)-pantothenate biosynthesis; (R)-pantothenate from (R)-pantoate and beta-alanine: step 1/1. In terms of biological role, catalyzes the condensation of pantoate with beta-alanine in an ATP-dependent reaction via a pantoyl-adenylate intermediate. In Thermotoga neapolitana, this protein is Pantothenate synthetase.